Consider the following 385-residue polypeptide: MNIHEFQAKELLRDFGINVADGIMVVSVDDALNAAKKLGGSVWAVKAQIHAGGRGLGGGVKIAKSLDEVKEYASKILGMTLVTKQTGPEGKLVKKLYIEKGTNIDKEYYLSLTFDRINECIAVIASADGGMNIEEVDHDKIITIRIDPQIGLRDFHSLAIADFLNLDKDLSVKLHVLLSKLYRLYWQTDSNLVEINPLVLTKENDLIPLDAKMGFDDSALFRQEKIANMRDIDEEEPSELEAKTYGLSYVKLDGNIGCMVNGAGLAMGTMDTINGVGGKPANFLDVGGGANPQTVAKAFEIILRDKNVKSIFVNIFGGIVRCDRIANGILEATKLTKVEVPVIVRLDGTNAKEAAEILKQANITNIISAPDLESGAKMSVELANK.

One can recognise an ATP-grasp domain in the interval 9–241; that stretch reads KELLRDFGIN…IDEEEPSELE (233 aa). ATP contacts are provided by residues lysine 46, 53 to 55, glutamate 99, threonine 102, and glutamate 107; that span reads GRG. Asparagine 196 and aspartate 210 together coordinate Mg(2+). Substrate-binding positions include asparagine 261 and 318-320; that span reads GIV.

Belongs to the succinate/malate CoA ligase beta subunit family. Heterotetramer of two alpha and two beta subunits. It depends on Mg(2+) as a cofactor.

It carries out the reaction succinate + ATP + CoA = succinyl-CoA + ADP + phosphate. The enzyme catalyses GTP + succinate + CoA = succinyl-CoA + GDP + phosphate. Its pathway is carbohydrate metabolism; tricarboxylic acid cycle; succinate from succinyl-CoA (ligase route): step 1/1. Its function is as follows. Succinyl-CoA synthetase functions in the citric acid cycle (TCA), coupling the hydrolysis of succinyl-CoA to the synthesis of either ATP or GTP and thus represents the only step of substrate-level phosphorylation in the TCA. The beta subunit provides nucleotide specificity of the enzyme and binds the substrate succinate, while the binding sites for coenzyme A and phosphate are found in the alpha subunit. This Campylobacter fetus subsp. fetus (strain 82-40) protein is Succinate--CoA ligase [ADP-forming] subunit beta.